Consider the following 176-residue polypeptide: 2-C-methyl-D-erythritol 2,4-cyclodiphosphate synthase (176 aa).

Residues Asp23, His25, and His60 each contribute to the a divalent metal cation site. 23-25 is a binding site for 4-CDP-2-C-methyl-D-erythritol 2-phosphate; it reads DSH. 149 to 152 provides a ligand contact to 4-CDP-2-C-methyl-D-erythritol 2-phosphate; the sequence is TSGE.

The protein belongs to the IspF family. As to quaternary structure, homotrimer. A divalent metal cation serves as cofactor.

It catalyses the reaction 4-CDP-2-C-methyl-D-erythritol 2-phosphate = 2-C-methyl-D-erythritol 2,4-cyclic diphosphate + CMP. It functions in the pathway isoprenoid biosynthesis; isopentenyl diphosphate biosynthesis via DXP pathway; isopentenyl diphosphate from 1-deoxy-D-xylulose 5-phosphate: step 4/6. Involved in the biosynthesis of isopentenyl diphosphate (IPP) and dimethylallyl diphosphate (DMAPP), two major building blocks of isoprenoid compounds. Catalyzes the conversion of 4-diphosphocytidyl-2-C-methyl-D-erythritol 2-phosphate (CDP-ME2P) to 2-C-methyl-D-erythritol 2,4-cyclodiphosphate (ME-CPP) with a corresponding release of cytidine 5-monophosphate (CMP). This chain is 2-C-methyl-D-erythritol 2,4-cyclodiphosphate synthase, found in Chlamydia felis (strain Fe/C-56) (Chlamydophila felis).